A 447-amino-acid chain; its full sequence is Putative branched-chain amino acid carrier protein SAR1419 (447 aa).

Helical transmembrane passes span 6–26 (WVIGFTLFAMFFGAGNLIFPP), 40–60 (ILAFVLTGIGLPLLGVIVGAL), 74–94 (PKFSILFLIIIYLTIGPLFAI), 114–134 (SSIALFIFTIIYFIVVLYICL), 143–163 (IGSLLTPLLLITILAMIIKAY), 193–213 (GYLTMDAIAAIAFSMIVVNAV), 229–249 (LTAGLIAAIALIFIYISLGYI), 290–310 (LLGIIVALACLTTACGLIVAV), 326–346 (FVLVFILMSFIIANQGLNAVI), 350–370 (IPVLSIVYPVAITVVLLILIA), 382–402 (IPVIIVFILSIFSVISKLGWL), and 417–437 (LEWFPVAIIATILGYLVGIFV).

This sequence belongs to the branched chain amino acid transporter family.

It localises to the cell membrane. Its function is as follows. Component of the transport system for branched-chain amino acids (leucine, isoleucine and valine), which is coupled to a proton motive force (Potential). Contributes to NaCl tolerance. The sequence is that of Putative branched-chain amino acid carrier protein SAR1419 from Staphylococcus aureus (strain MRSA252).